Consider the following 565-residue polypeptide: Ubiquitin carboxyl-terminal hydrolase 39 (565 aa).

2 stretches are compositionally biased toward basic and acidic residues: residues 1–21 (MSGR…ESES) and 28–39 (VKRERDREREPE). Disordered regions lie at residues 1-61 (MSGR…SARE) and 75-96 (EREV…GRVD). S46 bears the Phosphoserine mark. A Glycyl lysine isopeptide (Lys-Gly) (interchain with G-Cter in SUMO2) cross-link involves residue K51. S82 carries the phosphoserine modification. The segment covering 85–96 (EREVRAKNGRVD) has biased composition (basic and acidic residues). Residues 103–200 (RHCPYLDTIN…YVLKPTFTKQ (98 aa)) form a UBP-type; degenerate zinc finger. C136, C139, H155, and H161 together coordinate Zn(2+). One can recognise a USP domain in the interval 225 to 555 (VGLNNIKAND…EAYIQIWKRR (331 aa)).

This sequence belongs to the peptidase C19 family. As to quaternary structure, the U4/U6-U5 tri-snRNP complex is a building block of the precatalytic spliceosome (spliceosome B complex). Component of the U4/U6-U5 tri-snRNP complex composed of the U4, U6 and U5 snRNAs and at least PRPF3, PRPF4, PRPF6, PRPF8, PRPF31, SNRNP200, TXNL4A, SNRNP40, SNRPB, SNRPD1, SNRPD2, SNRPD3, SNRPE, SNRPF, SNRPG, DDX23, CD2BP2, PPIH, SNU13, EFTUD2, SART1 and USP39, plus LSM2, LSM3, LSM4, LSM5, LSM6, LSM7 and LSM8.

Its subcellular location is the nucleus. It catalyses the reaction Thiol-dependent hydrolysis of ester, thioester, amide, peptide and isopeptide bonds formed by the C-terminal Gly of ubiquitin (a 76-residue protein attached to proteins as an intracellular targeting signal).. Deubiquitinating enzyme that plays a role in many cellular processes including cellular antiviral response, epithelial morphogenesis, DNA repair or B-cell development. Plays a role in pre-mRNA splicing as a component of the U4/U6-U5 tri-snRNP, one of the building blocks of the precatalytic spliceosome. Specifically regulates immunoglobulin gene rearrangement in a spliceosome-dependent manner, which involves modulating chromatin interactions at the Igh locus and therefore plays an essential role in B-cell development. Regulates AURKB mRNA levels, and thereby plays a role in cytokinesis and in the spindle checkpoint. Regulates apoptosis and G2/M cell cycle checkpoint in response to DNA damage by deubiquitinating and stabilizing CHK2. Also plays an important role in DNA repair by controlling the recruitment of XRCC4/LIG4 to DNA double-strand breaks for non-homologous end-joining repair. Participates in antiviral activity by affecting the type I IFN signaling by stabilizing STAT1 and decreasing its 'Lys-6'-linked ubiquitination. Contributes to non-canonical Wnt signaling during epidermal differentiation. Acts as a negative regulator NF-kappa-B activation through deubiquitination of 'Lys-48'-linked ubiquitination of NFKBIA. The sequence is that of Ubiquitin carboxyl-terminal hydrolase 39 (USP39) from Pongo abelii (Sumatran orangutan).